A 193-amino-acid chain; its full sequence is Xanthine phosphoribosyltransferase (193 aa).

Positions 20 and 27 each coordinate xanthine. Position 128-132 (128-132 (ANGQA)) interacts with 5-phospho-alpha-D-ribose 1-diphosphate. Lys-156 is a xanthine binding site.

The protein belongs to the purine/pyrimidine phosphoribosyltransferase family. Xpt subfamily. As to quaternary structure, homodimer.

Its subcellular location is the cytoplasm. The enzyme catalyses XMP + diphosphate = xanthine + 5-phospho-alpha-D-ribose 1-diphosphate. Its pathway is purine metabolism; XMP biosynthesis via salvage pathway; XMP from xanthine: step 1/1. Its function is as follows. Converts the preformed base xanthine, a product of nucleic acid breakdown, to xanthosine 5'-monophosphate (XMP), so it can be reused for RNA or DNA synthesis. In Streptococcus uberis (strain ATCC BAA-854 / 0140J), this protein is Xanthine phosphoribosyltransferase.